The primary structure comprises 186 residues: Ribonuclease M5 (186 aa).

A Toprim domain is found at 4–94 (KEIIVVEGRD…AKPKNKRGIG (91 aa)). Mg(2+) contacts are provided by Glu10, Asp56, and Asp58.

This sequence belongs to the ribonuclease M5 family. In terms of assembly, requires ribosomal protein L18 (rplR) for catalysis; it can be replaced by 30% dimethylsulfoxide suggesting L18 functions as an rRNA folding chaperone. Requires Mg(2+) as cofactor. Mn(2+) serves as cofactor. It depends on Ca(2+) as a cofactor.

Its subcellular location is the cytoplasm. It carries out the reaction Endonucleolytic cleavage of RNA, removing 21 and 42 nucleotides, respectively, from the 5'- and 3'-termini of a 5S-rRNA precursor.. Required for correct processing of both the 5' and 3' ends of 5S rRNA precursor. Cleaves both sides of a double-stranded region yielding mature 5S rRNA in one step. Releases 5'-phosphoryl and 3'-hydroxy termini. The chain is Ribonuclease M5 from Bacillus subtilis (strain 168).